We begin with the raw amino-acid sequence, 136 residues long: Holo-[acyl-carrier-protein] synthase (136 aa).

2 residues coordinate Mg(2+): Asp8 and Glu57.

It belongs to the P-Pant transferase superfamily. AcpS family. The cofactor is Mg(2+).

Its subcellular location is the cytoplasm. It catalyses the reaction apo-[ACP] + CoA = holo-[ACP] + adenosine 3',5'-bisphosphate + H(+). In terms of biological role, transfers the 4'-phosphopantetheine moiety from coenzyme A to a Ser of acyl-carrier-protein. The polypeptide is Holo-[acyl-carrier-protein] synthase (Methylorubrum extorquens (strain PA1) (Methylobacterium extorquens)).